Consider the following 955-residue polypeptide: Probable trehalose monomycolate exporter MmpL3 (955 aa).

Residues 1–13 (MFAWWGRTVYRYR) are Cytoplasmic-facing. A helical membrane pass occupies residues 14–34 (FIVIGITVALCLCGGVFGLSL). The Periplasmic segment spans residues 35-190 (GKHVTQSGFY…TIATDQRRME (156 aa)). 40-44 (QSGFY) contacts a 1,2-diacylglycero-3-phosphoethanolamine. The chain crosses the membrane as a helical span at residues 191 to 213 (VLALPLVAVVLFLVFGGVIAACL). Residues 214–219 (PVMVGG) lie on the Cytoplasmic side of the membrane. The chain crosses the membrane as a helical span at residues 220–236 (LSIAGALGILRFIALFG). The Periplasmic portion of the chain corresponds to 237–244 (PVHFFAQP). A helical membrane pass occupies residues 245–262 (VVSLIGLGIAVDYGLFVV). At 263–291 (SRFREEIAEGYDTEAAVRRTVMTAGRTVT) the chain is on the cytoplasmic side. Residues 292–312 (FSAVLIAASGASLLLLPQGFV) form a helical membrane-spanning segment. Topologically, residues 313-319 (KSLTYAL) are periplasmic. A helical transmembrane segment spans residues 320–340 (IAAVTLAALLSITLLPACLAI). The Cytoplasmic segment spans residues 341–401 (LAKHVDALGV…KLVNFVMKRP (61 aa)). A helical membrane pass occupies residues 402–422 (LVFAIPIVIGMILLVIPLGNL). The Periplasmic portion of the chain corresponds to 423 to 567 (SFGGMSEKYL…HSLVAQAPLM (145 aa)). Residues 568–588 (VIMLITTTMLLMFLAFGSFVL) form a helical membrane-spanning segment. Residues 589 to 591 (PIK) lie on the Cytoplasmic side of the membrane. The chain crosses the membrane as a helical span at residues 592 to 612 (AAVMSALTLGSTMGILTWIFV). At 613–621 (DGHLSKWLN) the chain is on the periplasmic side. A helical membrane pass occupies residues 622–642 (FTPTPLMVVIIALVVAVGYGL). The Cytoplasmic segment spans residues 643–678 (ATDYEVFLVSRMVEARAESMSTQEAVRIGTASTGRL). Residues 679–699 (ITAAALVLAVVAGSFVFSDLV) form a helical membrane-spanning segment. The Periplasmic segment spans residues 700 to 703 (MMKY). Residues 704–724 (LAFGLMAALLLDATVVRMFLV) form a helical membrane-spanning segment. Topologically, residues 725 to 955 (PSVMKLLGDD…QDLLRREGRL (231 aa)) are cytoplasmic. Residues 759 to 955 (ERRRPTVSGR…QDLLRREGRL (197 aa)) are disordered. 2 stretches are compositionally biased toward polar residues: residues 821-860 (GAST…SQGV) and 890-902 (NRSS…TAEP).

It belongs to the resistance-nodulation-cell division (RND) (TC 2.A.6) family. MmpL subfamily.

It localises to the cell inner membrane. Its subcellular location is the cell septum. The protein localises to the cell tip. Its function is as follows. Transports trehalose monomycolate (TMM) to the cell wall. Flips TMM across the inner membrane. Membrane potential is not required for this function. Transports probably phosphatidylethanolamine (PE) as well. Contributes to membrane potential, cell wall composition, antibiotic susceptibility and fitness. This is Probable trehalose monomycolate exporter MmpL3 (mmpL3) from Mycobacterium leprae (strain TN).